The chain runs to 594 residues: AT-rich interactive domain-containing protein 5A (594 aa).

The tract at residues 1–56 (MAAPVKGNRKQSTEGDALDPPASPKPAGKQNGIQNPISLEDSPEAGGEREEEQERE) is disordered. Positions 1–300 (MAAPVKGNRK…AVHLPESPQS (300 aa)) are interaction with SOX9. Position 23 is a phosphoserine (Ser-23). The ARID domain occupies 55-147 (REEEQAFLVS…LVLPYVRHLK (93 aa)). Residues Lys-85 and Lys-94 each participate in a glycyl lysine isopeptide (Lys-Gly) (interchain with G-Cter in ubiquitin) cross-link. The tract at residues 146 to 223 (LKGEDDKPLP…NSTEQQGLAS (78 aa)) is disordered. Residues 165 to 189 (MAKENRGDDGATERPKKAKEERRMD) are compositionally biased toward basic and acidic residues. Phosphoserine occurs at positions 256 and 289. Disordered regions lie at residues 281 to 331 (RHGA…EAQA) and 426 to 454 (AESPTLPPTFPSSPGLGSKRSLEEEGAAH). Residues 297-306 (SPQSPKGLTE) show a composition bias toward polar residues. A phosphoserine mark is found at Ser-438 and Ser-463.

Interacts with SOX9. Interacts with ESR1. Interacts with RORC. Post-translationally, phosphorylated by MAPK14 on serine residues involving a TLR4 signaling pathway upon lipopolysaccharide (LPS) stimulation leading to its ubiquitination and proteasomal degradation. In terms of processing, ubiquitinated leading to proteasomal degradation; involving WWP1 linked to MAPK14-mediated phosphorylation upon LPS stimulation.

It localises to the nucleus. Functionally, DNA-binding protein that may regulate transcription and act as a repressor by binding to AT-rich stretches in the promoter region of target genes. May positively regulate chondrocyte-specific transcription such as of COL2A1 in collaboration with SOX9 and positively regulate histone H3 acetylation at chondrocyte-specific genes. May stimulate early-stage chondrocyte differentiation and inhibit later stage differention. Can repress ESR1-mediated transcriptional activation; proposed to act as corepressor for selective nuclear hormone receptors. As an RNA-binding protein, involved in the regulation of inflammatory response by stabilizing selective inflammation-related mRNAs, such as STAT3 and TBX21. Also stabilizes IL6 mRNA. Binds to stem loop structures located in the 3'UTRs of IL6, STAT3 and TBX21 mRNAs; at least for STAT3 prevents binding of ZC3H12A to the mRNA stem loop structure thus inhibiting its degradation activity. Contributes to elevated IL6 levels possibly implicated in autoimmunity processes. IL6-dependent stabilization of STAT3 mRNA may promote differentiation of naive CD4+ T-cells into T-helper Th17 cells. In CD4+ T-cells may also inhibit RORC-induced Th17 cell differentiation independently of IL6 signaling. Stabilization of TBX21 mRNA contributes to elevated interferon-gamma secretion in Th1 cells possibly implicated in the establishment of septic shock. Stabilizes TNFRSF4/OX40 mRNA by binding to the conserved stem loop structure in its 3'UTR; thereby competing with the mRNA-destabilizing functions of RC3H1 and endoribonuclease ZC3H12A. The polypeptide is AT-rich interactive domain-containing protein 5A (ARID5A) (Homo sapiens (Human)).